Here is a 361-residue protein sequence, read N- to C-terminus: UDP-N-acetylglucosamine--N-acetylmuramyl-(pentapeptide) pyrophosphoryl-undecaprenol N-acetylglucosamine transferase (361 aa).

UDP-N-acetyl-alpha-D-glucosamine-binding positions include 13–15 (TGG), asparagine 125, arginine 167, serine 196, isoleucine 251, 270–275 (ALTVTE), and glutamine 296.

Belongs to the glycosyltransferase 28 family. MurG subfamily.

The protein resides in the cell inner membrane. The enzyme catalyses di-trans,octa-cis-undecaprenyl diphospho-N-acetyl-alpha-D-muramoyl-L-alanyl-D-glutamyl-meso-2,6-diaminopimeloyl-D-alanyl-D-alanine + UDP-N-acetyl-alpha-D-glucosamine = di-trans,octa-cis-undecaprenyl diphospho-[N-acetyl-alpha-D-glucosaminyl-(1-&gt;4)]-N-acetyl-alpha-D-muramoyl-L-alanyl-D-glutamyl-meso-2,6-diaminopimeloyl-D-alanyl-D-alanine + UDP + H(+). The protein operates within cell wall biogenesis; peptidoglycan biosynthesis. Its function is as follows. Cell wall formation. Catalyzes the transfer of a GlcNAc subunit on undecaprenyl-pyrophosphoryl-MurNAc-pentapeptide (lipid intermediate I) to form undecaprenyl-pyrophosphoryl-MurNAc-(pentapeptide)GlcNAc (lipid intermediate II). The chain is UDP-N-acetylglucosamine--N-acetylmuramyl-(pentapeptide) pyrophosphoryl-undecaprenol N-acetylglucosamine transferase from Psychrobacter arcticus (strain DSM 17307 / VKM B-2377 / 273-4).